Reading from the N-terminus, the 168-residue chain is Plastocyanin, chloroplastic (168 aa).

The region spanning 70 to 168 (VEVLLGGGDG…AGMVGKVTVN (99 aa)) is the Plastocyanin-like domain. Cu cation contacts are provided by His-106, Cys-153, His-156, and Met-161.

Belongs to the plastocyanin family. The cofactor is Cu(2+).

It is found in the plastid. The protein localises to the chloroplast thylakoid membrane. Participates in electron transfer between P700 and the cytochrome b6-f complex in photosystem I. The chain is Plastocyanin, chloroplastic (PETE) from Spinacia oleracea (Spinach).